The following is an 88-amino-acid chain: Large ribosomal subunit protein bL27 (88 aa).

The disordered stretch occupies residues 1–24 (MAHKKGTGSTRNGRDSNSKRLGVK).

The protein belongs to the bacterial ribosomal protein bL27 family.

The sequence is that of Large ribosomal subunit protein bL27 from Synechococcus sp. (strain CC9311).